The chain runs to 188 residues: Photosystem I assembly protein Ycf4 (188 aa).

Helical transmembrane passes span 28-48 (WATV…SSYL) and 68-88 (IAIG…WATI).

Belongs to the Ycf4 family.

Its subcellular location is the cellular thylakoid membrane. Functionally, seems to be required for the assembly of the photosystem I complex. The protein is Photosystem I assembly protein Ycf4 of Cyanothece sp. (strain PCC 7425 / ATCC 29141).